Consider the following 493-residue polypeptide: V-type proton ATPase subunit B (493 aa).

The protein belongs to the ATPase alpha/beta chains family. In terms of assembly, V-ATPase is a heteromultimeric enzyme composed of a peripheral catalytic V1 complex (main components: subunits A, B, C, D, E, and F) attached to an integral membrane V0 proton pore complex (main component: the proteolipid protein).

Its subcellular location is the cytoplasmic vesicle membrane. The protein resides in the endosome membrane. It is found in the contractile vacuole membrane. In terms of biological role, vacuolar ATPase is responsible for acidifying a variety of intracellular compartments in eukaryotic cells. The B subunit is non-catalytic but combines with other subunits to form the catalytic complex. V-ATPase is responsible for energizing electrophoretic K(+)/2H(+) antiport by generating a transmembrane voltage of more than 200 mV. In Dictyostelium discoideum (Social amoeba), this protein is V-type proton ATPase subunit B (vatB).